The following is an 891-amino-acid chain: Alanine--tRNA ligase (891 aa).

His-569, His-573, Cys-671, and His-675 together coordinate Zn(2+).

It belongs to the class-II aminoacyl-tRNA synthetase family. Homotetramer. Requires Zn(2+) as cofactor.

Its subcellular location is the cytoplasm. The enzyme catalyses tRNA(Ala) + L-alanine + ATP = L-alanyl-tRNA(Ala) + AMP + diphosphate. In terms of biological role, catalyzes the attachment of alanine to tRNA(Ala) in a two-step reaction: alanine is first activated by ATP to form Ala-AMP and then transferred to the acceptor end of tRNA(Ala). Also edits incorrectly charged Ser-tRNA(Ala) and Gly-tRNA(Ala) via its editing domain. This chain is Alanine--tRNA ligase, found in Blochmanniella floridana.